A 419-amino-acid polypeptide reads, in one-letter code: tRNA(Met) cytidine acetate ligase (419 aa).

Residues 7-20 (ITEY…HLHH), Gly-101, Asn-163, and Arg-188 contribute to the ATP site.

It belongs to the TmcAL family.

It is found in the cytoplasm. It catalyses the reaction cytidine(34) in elongator tRNA(Met) + acetate + ATP = N(4)-acetylcytidine(34) in elongator tRNA(Met) + AMP + diphosphate. In terms of biological role, catalyzes the formation of N(4)-acetylcytidine (ac(4)C) at the wobble position of elongator tRNA(Met), using acetate and ATP as substrates. First activates an acetate ion to form acetyladenylate (Ac-AMP) and then transfers the acetyl group to tRNA to form ac(4)C34. The protein is tRNA(Met) cytidine acetate ligase of Syntrophotalea carbinolica (strain DSM 2380 / NBRC 103641 / GraBd1) (Pelobacter carbinolicus).